A 209-amino-acid chain; its full sequence is MSVKEINHPLVQHKLGLMREAGISSKNFRELASEVGNLLTYEATRELETETVEINGWNDQPIKVKKIKGKKITIVPILRAGLGMLDGVMQLIPNAKVSVVGLYRDEETLQPVAYFDKVVKDVEERTALIVDPMLATGGTLIATIDLLKEKGCQHIMGLFLVAAPEGIEAVVSKHPDVDIYTAAVDDKLNEHGYILPGLGDAGDKIFGTR.

Residues Arg79, Arg104, and 131–139 (DPMLATGGT) contribute to the 5-phospho-alpha-D-ribose 1-diphosphate site. Uracil contacts are provided by residues Ile194 and 199–201 (GDA). Asp200 contacts 5-phospho-alpha-D-ribose 1-diphosphate.

It belongs to the UPRTase family. Requires Mg(2+) as cofactor.

It catalyses the reaction UMP + diphosphate = 5-phospho-alpha-D-ribose 1-diphosphate + uracil. It functions in the pathway pyrimidine metabolism; UMP biosynthesis via salvage pathway; UMP from uracil: step 1/1. Allosterically activated by GTP. In terms of biological role, catalyzes the conversion of uracil and 5-phospho-alpha-D-ribose 1-diphosphate (PRPP) to UMP and diphosphate. This is Uracil phosphoribosyltransferase from Pseudoalteromonas atlantica (strain T6c / ATCC BAA-1087).